Consider the following 726-residue polypeptide: Catalase-peroxidase (726 aa).

A cross-link (tryptophyl-tyrosyl-methioninium (Trp-Tyr) (with M-242)) is located at residues tryptophan 93–tyrosine 216. Catalysis depends on histidine 94, which acts as the Proton acceptor. The tryptophyl-tyrosyl-methioninium (Tyr-Met) (with W-93) cross-link spans tyrosine 216–methionine 242. A heme b-binding site is contributed by histidine 257. The interval glycine 471–aspartate 490 is disordered.

It belongs to the peroxidase family. Peroxidase/catalase subfamily. Homodimer or homotetramer. Heme b serves as cofactor. Formation of the three residue Trp-Tyr-Met cross-link is important for the catalase, but not the peroxidase activity of the enzyme.

The catalysed reaction is H2O2 + AH2 = A + 2 H2O. The enzyme catalyses 2 H2O2 = O2 + 2 H2O. Its function is as follows. Bifunctional enzyme with both catalase and broad-spectrum peroxidase activity. This chain is Catalase-peroxidase, found in Methylacidiphilum infernorum (isolate V4) (Methylokorus infernorum (strain V4)).